Here is a 781-residue protein sequence, read N- to C-terminus: Probable serine/threonine-protein kinase C70.05c (781 aa).

2 disordered regions span residues 1–315 (MPSD…PLVS) and 368–417 (YSGK…TNIS). The segment covering 21-31 (ESPSSRSIGSG) has biased composition (low complexity). Over residues 43 to 63 (FKNSFLSRKNSSQIKSPSDYK) the composition is skewed to polar residues. Positions 64–73 (SSAHEQRVNH) are enriched in basic and acidic residues. Positions 74-92 (TTDSMAHVPGNNSPLQTPQ) are enriched in polar residues. S94 bears the Phosphoserine mark. Over residues 112-121 (SRHHKPHHSG) the composition is skewed to basic residues. 3 stretches are compositionally biased toward polar residues: residues 136–146 (SNANSPTSESP), 161–195 (KNTS…PNSR), and 206–228 (NSAS…SLSR). Position 253 is a phosphoserine (S253). The segment covering 272–304 (PLTASPTPSSPTGTPNSMSKSPSLSSLASTGAS) has biased composition (low complexity). The segment covering 379–406 (NVGSSANTAPNSPTSANSSEGNQGNGPT) has biased composition (polar residues). The 311-residue stretch at 432-742 (AKRVVPRLSA…AQEALNLPFV (311 aa)) folds into the Protein kinase domain. ATP is bound by residues 452–460 (MGSGATAVI) and K480. D584 acts as the Proton acceptor in catalysis.

Belongs to the protein kinase superfamily. Ser/Thr protein kinase family.

The protein resides in the cytoplasm. It carries out the reaction L-seryl-[protein] + ATP = O-phospho-L-seryl-[protein] + ADP + H(+). It catalyses the reaction L-threonyl-[protein] + ATP = O-phospho-L-threonyl-[protein] + ADP + H(+). The polypeptide is Probable serine/threonine-protein kinase C70.05c (Schizosaccharomyces pombe (strain 972 / ATCC 24843) (Fission yeast)).